The chain runs to 666 residues: Neopullulanase 1 (666 aa).

A signal peptide spans 1-29; the sequence is MIKLLKPMSLSILLVFILSFSFPFPTAKA. 11 residues coordinate Ca(2+): Ala31, Asp33, Asn35, Asp71, Asp125, Asn174, Asp176, Asn179, Asp180, Gly216, and Asp218. His296 contributes to the substrate binding site. Positions 305, 309, 310, 312, and 317 each coordinate Ca(2+). Substrate is bound at residue Arg383. Asp385 acts as the Nucleophile in catalysis. The active-site Proton donor is the Glu425. Substrate is bound by residues 500 to 501, Asp545, and Arg549; that span reads HD.

The protein belongs to the glycosyl hydrolase 13 family. The cofactor is Ca(2+).

The protein resides in the secreted. It carries out the reaction Hydrolysis of pullulan to panose (6-alpha-D-glucosylmaltose).. Its function is as follows. Endohydrolysis of 1,4-alpha-glucosidic linkages in pullulan to form panose. Also hydrolyzes cyclodextrins. The polypeptide is Neopullulanase 1 (tvaI) (Thermoactinomyces vulgaris).